A 375-amino-acid chain; its full sequence is Queuine tRNA-ribosyltransferase (375 aa).

The Proton acceptor role is filled by Asp-94. Substrate is bound by residues 94–98 (DSGGF), Asp-148, Gln-191, and Gly-218. The segment at 249–255 (GVGSPDD) is RNA binding. Asp-268 functions as the Nucleophile in the catalytic mechanism. The RNA binding; important for wobble base 34 recognition stretch occupies residues 273 to 277 (TRIAR). Residues Cys-306, Cys-308, Cys-311, and His-337 each coordinate Zn(2+).

The protein belongs to the queuine tRNA-ribosyltransferase family. Homodimer. Within each dimer, one monomer is responsible for RNA recognition and catalysis, while the other monomer binds to the replacement base PreQ1. It depends on Zn(2+) as a cofactor.

It catalyses the reaction 7-aminomethyl-7-carbaguanine + guanosine(34) in tRNA = 7-aminomethyl-7-carbaguanosine(34) in tRNA + guanine. It functions in the pathway tRNA modification; tRNA-queuosine biosynthesis. Functionally, catalyzes the base-exchange of a guanine (G) residue with the queuine precursor 7-aminomethyl-7-deazaguanine (PreQ1) at position 34 (anticodon wobble position) in tRNAs with GU(N) anticodons (tRNA-Asp, -Asn, -His and -Tyr). Catalysis occurs through a double-displacement mechanism. The nucleophile active site attacks the C1' of nucleotide 34 to detach the guanine base from the RNA, forming a covalent enzyme-RNA intermediate. The proton acceptor active site deprotonates the incoming PreQ1, allowing a nucleophilic attack on the C1' of the ribose to form the product. After dissociation, two additional enzymatic reactions on the tRNA convert PreQ1 to queuine (Q), resulting in the hypermodified nucleoside queuosine (7-(((4,5-cis-dihydroxy-2-cyclopenten-1-yl)amino)methyl)-7-deazaguanosine). The sequence is that of Queuine tRNA-ribosyltransferase from Thermoanaerobacter sp. (strain X514).